Consider the following 631-residue polypeptide: Phosphomethylpyrimidine synthase (631 aa).

Residues Asn239, Met268, Tyr297, His333, 353 to 355 (SRG), 394 to 397 (DGLR), and Glu433 each bind substrate. His437 is a binding site for Zn(2+). Tyr460 contributes to the substrate binding site. His501 contributes to the Zn(2+) binding site. Residues Cys581, Cys584, and Cys589 each coordinate [4Fe-4S] cluster.

The protein belongs to the ThiC family. Homodimer. [4Fe-4S] cluster is required as a cofactor.

It catalyses the reaction 5-amino-1-(5-phospho-beta-D-ribosyl)imidazole + S-adenosyl-L-methionine = 4-amino-2-methyl-5-(phosphooxymethyl)pyrimidine + CO + 5'-deoxyadenosine + formate + L-methionine + 3 H(+). The protein operates within cofactor biosynthesis; thiamine diphosphate biosynthesis. Functionally, catalyzes the synthesis of the hydroxymethylpyrimidine phosphate (HMP-P) moiety of thiamine from aminoimidazole ribotide (AIR) in a radical S-adenosyl-L-methionine (SAM)-dependent reaction. This chain is Phosphomethylpyrimidine synthase, found in Shigella sonnei (strain Ss046).